Consider the following 253-residue polypeptide: Acidic endochitinase Q (253 aa).

Positions M1–A24 are cleaved as a signal peptide. The Proton donor role is filled by E92. Cysteines 212 and 244 form a disulfide.

This sequence belongs to the glycosyl hydrolase 19 family. Chitinase class I subfamily.

Its subcellular location is the secreted. The catalysed reaction is Random endo-hydrolysis of N-acetyl-beta-D-glucosaminide (1-&gt;4)-beta-linkages in chitin and chitodextrins.. Defense against chitin-containing fungal pathogens. In Nicotiana tabacum (Common tobacco), this protein is Acidic endochitinase Q.